The primary structure comprises 176 residues: Cytochrome b (176 aa).

A run of 3 helical transmembrane segments spans residues 33–53, 77–98, and 113–133; these read FGSLLGICLALQILTGIFLAM, WVLRYLHANGASMFFICLYLHV, and WNMGVILLFAVMATAFMGYVL. The heme b site is built by histidine 83 and histidine 97.

This sequence belongs to the cytochrome b family. As to quaternary structure, the cytochrome bc1 complex contains 11 subunits: 3 respiratory subunits (MT-CYB, CYC1 and UQCRFS1), 2 core proteins (UQCRC1 and UQCRC2) and 6 low-molecular weight proteins (UQCRH/QCR6, UQCRB/QCR7, UQCRQ/QCR8, UQCR10/QCR9, UQCR11/QCR10 and a cleavage product of UQCRFS1). This cytochrome bc1 complex then forms a dimer. It depends on heme b as a cofactor.

The protein localises to the mitochondrion inner membrane. Functionally, component of the ubiquinol-cytochrome c reductase complex (complex III or cytochrome b-c1 complex) that is part of the mitochondrial respiratory chain. The b-c1 complex mediates electron transfer from ubiquinol to cytochrome c. Contributes to the generation of a proton gradient across the mitochondrial membrane that is then used for ATP synthesis. The chain is Cytochrome b (MT-CYB) from Lasionycteris noctivagans (Silver-haired bat).